Here is a 251-residue protein sequence, read N- to C-terminus: Aquaporin TIP1-1 (251 aa).

An N-acetylmethionine modification is found at Met-1. The Cytoplasmic portion of the chain corresponds to 1 to 23; the sequence is MPIRNIAIGRPDEATRPDALKAA. Residues 24 to 44 traverse the membrane as a helical segment; that stretch reads LAEFISTLIFVVAGSGSGMAF. Residues 45 to 56 are Vacuolar-facing; the sequence is NKLTENGATTPS. A helical transmembrane segment spans residues 57–77; that stretch reads GLVAAAVAHAFGLFVAVSVGA. Over 78–103 the chain is Cytoplasmic; sequence NISGGHVNPAVTFGAFIGGNITLLRG. The NPA 1 motif lies at 85–87; sequence NPA. The chain crosses the membrane as a helical span at residues 104–124; the sequence is ILYWIAQLLGSVVACLILKFA. Residues 125 to 143 lie on the Vacuolar side of the membrane; sequence TGGLAVPAFGLSAGVGVLN. The helical transmembrane segment at 144–164 threads the bilayer; it reads AFVFEIVMTFGLVYTVYATAI. The Cytoplasmic portion of the chain corresponds to 165 to 172; the sequence is DPKNGSLG. A helical membrane pass occupies residues 173 to 193; it reads TIAPIAIGFIVGANILAGGAF. At 194-218 the chain is on the vacuolar side; that stretch reads SGASMNPAVAFGPAVVSWTWTNHWV. Positions 199–201 match the NPA 2 motif; the sequence is NPA. A helical transmembrane segment spans residues 219-239; it reads YWAGPLVGGGIAGLIYEVFFI. Over 240–251 the chain is Cytoplasmic; it reads NTTHEQLPTTDY.

Belongs to the MIP/aquaporin (TC 1.A.8) family. TIP (TC 1.A.8.10) subfamily. As to quaternary structure, interacts with cucumber mosaic virus (CMV) Protein 1a. As to expression, in all the vegetative organs, but not in seeds. Preferentially expressed in roots.

The protein localises to the vacuole membrane. Its function is as follows. Water channel required to facilitate the transport of water, diffusion of amino acids and/or peptides from the vacuolar compartment to the cytoplasm. Does not promote glycerol permeability. May play a role in the control of cell turgor and cell expansion. Its function is impaired by Hg(2+). May be involved in a vesicle-based metabolite routing through or between pre-vacuolar compartments and the central vacuole. Transports urea in yeast cells in a pH-independent manner. Transports H(2)O(2) in yeast cells. This is Aquaporin TIP1-1 (TIP1-1) from Arabidopsis thaliana (Mouse-ear cress).